Reading from the N-terminus, the 505-residue chain is DNA primase DnaG (505 aa).

The Toprim domain occupies 167-241 (DAVIVVEGRA…DVDYVAFAPP (75 aa)). 3 residues coordinate Mg(2+): Glu-173, Asp-215, and Asp-217. The disordered stretch occupies residues 268 to 410 (DEPNLREAAT…PLDNEPRSIE (143 aa)). The segment covering 318–327 (AGVVAGGARS) has biased composition (low complexity). Acidic residues-rich tracts occupy residues 349–376 (GEVD…DAEF) and 384–402 (PNLD…DAPL).

Belongs to the archaeal DnaG primase family. In terms of assembly, forms a ternary complex with MCM helicase and DNA. It depends on Mg(2+) as a cofactor.

It carries out the reaction ssDNA + n NTP = ssDNA/pppN(pN)n-1 hybrid + (n-1) diphosphate.. In terms of biological role, RNA polymerase that catalyzes the synthesis of short RNA molecules used as primers for DNA polymerase during DNA replication. The polypeptide is DNA primase DnaG (Halorubrum lacusprofundi (strain ATCC 49239 / DSM 5036 / JCM 8891 / ACAM 34)).